A 485-amino-acid polypeptide reads, in one-letter code: Mitochondrial metalloendopeptidase OMA1 (485 aa).

Residues 1-16 (MKPSLKRRLLLLSRKF) constitute a mitochondrion transit peptide. Residues 17-147 (AKASIRKLLR…GPGRWFQNPR (131 aa)) lie on the Mitochondrial matrix side of the membrane. Residues 148 to 168 (TVFTVVLVGSVGLITLIVGNT) traverse the membrane as a helical segment. The Mitochondrial intermembrane portion of the chain corresponds to 169 to 485 (ETIPYTKRTH…AGRTGVEGFL (317 aa)). Histidine 352 contributes to the Zn(2+) binding site. Residue glutamate 353 is part of the active site. Residues histidine 356 and glutamate 405 each contribute to the Zn(2+) site. The required for protease activation stretch occupies residues 456-485 (KLLAQANVMEEALMIYREVQAGRTGVEGFL).

This sequence belongs to the peptidase M48A family. Homooligomer. Zn(2+) is required as a cofactor.

It localises to the mitochondrion inner membrane. Functionally, protease that is part of the quality control system in the inner membrane of mitochondria. Metalloendopeptidase that modulates the oxidative phosphorylation (OXPHOS) system and plant growth. Involved in tolerance mechanisms to heat, osmotic and oxidative stresses. This chain is Mitochondrial metalloendopeptidase OMA1, found in Arabidopsis thaliana (Mouse-ear cress).